We begin with the raw amino-acid sequence, 173 residues long: Glycine cleavage system H protein, mitochondrial (173 aa).

The transit peptide at 1–48 directs the protein to the mitochondrion; that stretch reads MALRAVRSVRAAVGGLRAISAPSAPCLPRPWGLRAGAVRELRTGPALL. Positions 66–148 constitute a Lipoyl-binding domain; it reads VGTVGISNFA…YEDGWLIKMT (83 aa). An N6-lipoyllysine modification is found at Lys-107.

The protein belongs to the GcvH family. Interacts with GLDC. The glycine cleavage system is composed of four proteins: P (GLDC), T (GCST), L (DLD) and H (GCSH). It depends on (R)-lipoate as a cofactor.

The protein resides in the mitochondrion. Functionally, the glycine cleavage system catalyzes the degradation of glycine. The H protein (GCSH) shuttles the methylamine group of glycine from the P protein (GLDC) to the T protein (GCST). Has a pivotal role in the lipoylation of enzymes involved in cellular energetics such as the mitochondrial dihydrolipoyllysine-residue acetyltransferase component of pyruvate dehydrogenase complex (DLAT), and the mitochondrial dihydrolipoyllysine-residue succinyltransferase component of 2-oxoglutarate dehydrogenase complex (DLST). The chain is Glycine cleavage system H protein, mitochondrial from Bos taurus (Bovine).